Consider the following 196-residue polypeptide: Peroxiredoxin TSA2 (196 aa).

The region spanning 3-161 (AEVQKQAPPF…ALRLVEGFQW (159 aa)) is the Thioredoxin domain. A Glycyl lysine isopeptide (Lys-Gly) (interchain with G-Cter in ubiquitin) cross-link involves residue K14. C48 functions as the Cysteine sulfenic acid (-SOH) intermediate in the catalytic mechanism. Glycyl lysine isopeptide (Lys-Gly) (interchain with G-Cter in ubiquitin) cross-links involve residues K89 and K132. Residue T174 is modified to Phosphothreonine.

The protein belongs to the peroxiredoxin family. AhpC/Prx1 subfamily. As to quaternary structure, homodimer; disulfide-linked, upon oxidation.

The protein resides in the cytoplasm. It catalyses the reaction a hydroperoxide + [thioredoxin]-dithiol = an alcohol + [thioredoxin]-disulfide + H2O. Functionally, thiol-specific peroxidase that catalyzes the reduction of hydrogen peroxide and organic hydroperoxides to water and alcohols, respectively. Plays a role in cell protection against oxidative stress by detoxifying peroxides and as sensor of hydrogen peroxide-mediated signaling events. Can act alternatively as peroxidase and molecular chaperone. Oxidative stress and heat shock exposure cause a reversible shift of the protein structure from low MW species to high MW complexes, triggering a peroxidase-to-chaperone functional switch. The chaperone function of the protein enhances resistance to heat shock. The chain is Peroxiredoxin TSA2 from Saccharomyces cerevisiae (strain ATCC 204508 / S288c) (Baker's yeast).